The chain runs to 199 residues: Recombination protein RecR (199 aa).

Residues 57–72 (CERCNNLSEAPLCAVC) form a C4-type zinc finger. The region spanning 80–174 (SILCVVESPA…TISRIARGVP (95 aa)) is the Toprim domain.

This sequence belongs to the RecR family.

May play a role in DNA repair. It seems to be involved in an RecBC-independent recombinational process of DNA repair. It may act with RecF and RecO. The polypeptide is Recombination protein RecR (Acidithiobacillus ferrooxidans (strain ATCC 23270 / DSM 14882 / CIP 104768 / NCIMB 8455) (Ferrobacillus ferrooxidans (strain ATCC 23270))).